The following is a 284-amino-acid chain: ATP synthase subunit a (284 aa).

Transmembrane regions (helical) follow at residues 47-67 (AFHL…LIFF), 108-128 (VAPL…MDLV), 156-176 (VPTA…ILII), 233-253 (MIFI…SLPW), and 254-274 (AIFH…LVIV).

The protein belongs to the ATPase A chain family. F-type ATPases have 2 components, CF(1) - the catalytic core - and CF(0) - the membrane proton channel. CF(1) has five subunits: alpha(3), beta(3), gamma(1), delta(1), epsilon(1). CF(0) has three main subunits: a(1), b(2) and c(9-12). The alpha and beta chains form an alternating ring which encloses part of the gamma chain. CF(1) is attached to CF(0) by a central stalk formed by the gamma and epsilon chains, while a peripheral stalk is formed by the delta and b chains.

It is found in the cell inner membrane. Functionally, key component of the proton channel; it plays a direct role in the translocation of protons across the membrane. In Ruthia magnifica subsp. Calyptogena magnifica, this protein is ATP synthase subunit a.